We begin with the raw amino-acid sequence, 248 residues long: ATP synthase subunit a (248 aa).

The next 6 membrane-spanning stretches (helical) occupy residues 34-54 (TNATLWMALAALAITALLVFG), 91-111 (YFPYVMTLFCFILFANFLGLL), 121-141 (IAVTAVLAVLVFAGVTVLGFV), 147-167 (FLGLFWVSSAPLALRPVLAVI), 196-216 (VFAAFAAVAAIAPVSVVAITA), and 220-240 (LEVLVCLIQAYVFTILTCVYL).

The protein belongs to the ATPase A chain family. F-type ATPases have 2 components, CF(1) - the catalytic core - and CF(0) - the membrane proton channel. CF(1) has five subunits: alpha(3), beta(3), gamma(1), delta(1), epsilon(1). CF(0) has three main subunits: a(1), b(2) and c(9-12). The alpha and beta chains form an alternating ring which encloses part of the gamma chain. CF(1) is attached to CF(0) by a central stalk formed by the gamma and epsilon chains, while a peripheral stalk is formed by the delta and b chains.

Its subcellular location is the cell inner membrane. Key component of the proton channel; it plays a direct role in the translocation of protons across the membrane. The chain is ATP synthase subunit a from Paracoccus denitrificans (strain Pd 1222).